The following is a 132-amino-acid chain: Extracellular small neutral protease (132 aa).

Residues aspartate 76 and threonine 78 each contribute to the Ca(2+) site. Histidine 83 is a Zn(2+) binding site. Glutamate 84 is a catalytic residue. Zn(2+) is bound by residues histidine 87 and aspartate 93. An intrachain disulfide couples cysteine 99 to cysteine 112.

The protein belongs to the peptidase M7 family. Ca(2+) serves as cofactor. The cofactor is Zn(2+).

The protein resides in the secreted. The enzyme catalyses Hydrolyzes proteins with a preference for Tyr or Phe in the P1' position. Has no action on amino-acid p-nitroanilides.. In terms of biological role, specifically hydrolyzes the peptide bond at the imino side of aromatic residues. The polypeptide is Extracellular small neutral protease (snpA) (Streptomyces caespitosus).